Reading from the N-terminus, the 413-residue chain is Alpha-1-antitrypsin-like protein CM55-SI (413 aa).

A signal peptide spans 1 to 24 (MPSSISWGLLLLAALSCLGPGSLA). Residue Gln25 is modified to Pyrrolidone carboxylic acid. 4 N-linked (GlcNAc...) asparagine glycosylation sites follow: Asn65, Asn102, Asn165, and Asn266. Residues 368–387 (GGTVLGNIRSILRYEVIFDR) form an RCL region.

It belongs to the serpin family. As to expression, expressed in liver.

This chain is Alpha-1-antitrypsin-like protein CM55-SI, found in Tamias sibiricus (Siberian chipmunk).